Here is a 406-residue protein sequence, read N- to C-terminus: Imidazolonepropionase (406 aa).

Fe(3+)-binding residues include His-72 and His-74. Zn(2+)-binding residues include His-72 and His-74. 4-imidazolone-5-propanoate contacts are provided by Arg-81, Tyr-144, and His-177. Tyr-144 lines the N-formimidoyl-L-glutamate pocket. Fe(3+) is bound at residue His-242. Residue His-242 coordinates Zn(2+). Gln-245 contacts 4-imidazolone-5-propanoate. Position 317 (Asp-317) interacts with Fe(3+). Zn(2+) is bound at residue Asp-317. 2 residues coordinate N-formimidoyl-L-glutamate: Asn-319 and Gly-321. Residue Thr-322 participates in 4-imidazolone-5-propanoate binding.

It belongs to the metallo-dependent hydrolases superfamily. HutI family. Requires Zn(2+) as cofactor. Fe(3+) serves as cofactor.

The protein localises to the cytoplasm. The catalysed reaction is 4-imidazolone-5-propanoate + H2O = N-formimidoyl-L-glutamate. It functions in the pathway amino-acid degradation; L-histidine degradation into L-glutamate; N-formimidoyl-L-glutamate from L-histidine: step 3/3. Its function is as follows. Catalyzes the hydrolytic cleavage of the carbon-nitrogen bond in imidazolone-5-propanoate to yield N-formimidoyl-L-glutamate. It is the third step in the universal histidine degradation pathway. The protein is Imidazolonepropionase of Yersinia pseudotuberculosis serotype O:3 (strain YPIII).